A 30-amino-acid chain; its full sequence is Propionyl-CoA carboxylase alpha chain (30 aa).

The Biotin carboxylation domain occupies 1–30 (PKIRKVLVANRGEIAIRVMRTXKELGIATV).

Dodecamer composed of six biotin-containing alpha subunits and six beta subunits. It depends on Mg(2+) as a cofactor. Requires Mn(2+) as cofactor. Biotin serves as cofactor.

The enzyme catalyses propanoyl-CoA + hydrogencarbonate + ATP = (S)-methylmalonyl-CoA + ADP + phosphate + H(+). It participates in metabolic intermediate metabolism; propanoyl-CoA degradation; succinyl-CoA from propanoyl-CoA: step 1/3. Its function is as follows. This is one of the 2 subunits of the biotin-dependent propionyl-CoA carboxylase (PCC), the enzyme catalyzing the carboxylation of propionyl-CoA/propanoyl-CoA to D-methylmalonyl-CoA/(S)-methylmalonyl-CoA. Within the holoenzyme, the alpha subunit catalyzes the ATP-dependent carboxylation of the biotin carried by the biotin carboxyl carrier (BCC) domain, while the beta subunit then transfers the carboxyl group from carboxylated biotin to propionyl-CoA. Propionyl-CoA carboxylase also carboxylates acetyl-CoA, butyryl-CoA and succinyl-CoA. The sequence is that of Propionyl-CoA carboxylase alpha chain from Myxococcus xanthus.